Reading from the N-terminus, the 500-residue chain is ATP synthase subunit alpha, sodium ion specific (500 aa).

169 to 176 is an ATP binding site; it reads GDRQTGKT.

This sequence belongs to the ATPase alpha/beta chains family. In terms of assembly, F-type ATPases have 2 components, CF(1) - the catalytic core - and CF(0) - the membrane proton channel. CF(1) has five subunits: alpha(3), beta(3), gamma(1), delta(1), epsilon(1). CF(0) has three main subunits: a, b and c.

The protein resides in the cell membrane. It carries out the reaction 4 Na(+)(in) + ATP + H2O = 4 Na(+)(out) + ADP + phosphate + H(+). Produces ATP from ADP in the presence of a sodium ion gradient across the membrane. The alpha chain is a regulatory subunit. The protein is ATP synthase subunit alpha, sodium ion specific of Propionigenium modestum.